Here is a 464-residue protein sequence, read N- to C-terminus: tRNA modification GTPase MnmE (464 aa).

3 residues coordinate (6S)-5-formyl-5,6,7,8-tetrahydrofolate: Arg-27, Glu-90, and Lys-129. The 163-residue stretch at 222–384 folds into the TrmE-type G domain; the sequence is GITLVLAGSV…LYDKIRTLIS (163 aa). GTP contacts are provided by residues 232–237, 251–257, and 276–279; these read NAGKSS, SSYPGTT, and DTAG. Mg(2+) contacts are provided by Ser-236 and Thr-257. (6S)-5-formyl-5,6,7,8-tetrahydrofolate is bound at residue Lys-464.

The protein belongs to the TRAFAC class TrmE-Era-EngA-EngB-Septin-like GTPase superfamily. TrmE GTPase family. Homodimer. Heterotetramer of two MnmE and two MnmG subunits. It depends on K(+) as a cofactor.

It localises to the cytoplasm. Exhibits a very high intrinsic GTPase hydrolysis rate. Involved in the addition of a carboxymethylaminomethyl (cmnm) group at the wobble position (U34) of certain tRNAs, forming tRNA-cmnm(5)s(2)U34. This Borreliella afzelii (strain PKo) (Borrelia afzelii) protein is tRNA modification GTPase MnmE.